The chain runs to 335 residues: Phosphoserine phosphatase RsbU (335 aa).

A PPM-type phosphatase domain is found at 123–333 (DIGAISVPAK…DDFTLIVLRR (211 aa)).

The enzyme catalyses O-phospho-L-serine + H2O = L-serine + phosphate. It catalyses the reaction O-phospho-D-serine + H2O = D-serine + phosphate. Stimulated by a long-lived interaction with RsbT. In terms of biological role, positive regulator of sigma-B activity. Dephosphorylates RsbV in response to environmental stress conveyed from the RsbXST module. The polypeptide is Phosphoserine phosphatase RsbU (rsbU) (Bacillus subtilis (strain 168)).